Here is a 110-residue protein sequence, read N- to C-terminus: V-type proton ATPase subunit F (110 aa).

This sequence belongs to the V-ATPase F subunit family. V-ATPase is a heteromultimeric enzyme made up of two complexes: the ATP-hydrolytic V1 complex and the proton translocation V0 complex. The V1 complex consists of three catalytic AB heterodimers that form a heterohexamer, three peripheral stalks each consisting of EG heterodimers, one central rotor including subunits D and F, and the regulatory subunits C and H. The proton translocation complex V0 consists of the proton transport subunit a, a ring of proteolipid subunits c9c'', rotary subunit d, subunits e and f, and two accessory subunits.

Functionally, subunit of the V1 complex of vacuolar(H+)-ATPase (V-ATPase), a multisubunit enzyme composed of a peripheral complex (V1) that hydrolyzes ATP and a membrane integral complex (V0) that translocates protons. V-ATPase is responsible for acidifying and maintaining the pH of intracellular compartments and in some cell types, is targeted to the plasma membrane, where it is responsible for acidifying the extracellular environment. This chain is V-type proton ATPase subunit F (atp6s14), found in Xenopus laevis (African clawed frog).